A 112-amino-acid chain; its full sequence is Small ribosomal subunit protein uS17 (112 aa).

This sequence belongs to the universal ribosomal protein uS17 family. As to quaternary structure, part of the 30S ribosomal subunit.

Its function is as follows. One of the primary rRNA binding proteins, it binds specifically to the 5'-end of 16S ribosomal RNA. This Thermotoga neapolitana (strain ATCC 49049 / DSM 4359 / NBRC 107923 / NS-E) protein is Small ribosomal subunit protein uS17.